The primary structure comprises 137 residues: Peptide methionine sulfoxide reductase MsrB (137 aa).

Residues 7–129 (PTENIEKLSD…NSASLNFVDD (123 aa)) enclose the MsrB domain. Positions 46, 49, 95, and 98 each coordinate Zn(2+). Residue Cys-118 is the Nucleophile of the active site.

It belongs to the MsrB Met sulfoxide reductase family. Zn(2+) is required as a cofactor.

It catalyses the reaction L-methionyl-[protein] + [thioredoxin]-disulfide + H2O = L-methionyl-(R)-S-oxide-[protein] + [thioredoxin]-dithiol. This is Peptide methionine sulfoxide reductase MsrB from Yersinia pseudotuberculosis serotype O:1b (strain IP 31758).